The primary structure comprises 233 residues: tRNA (guanine-N(7)-)-methyltransferase (233 aa).

The tract at residues 1 to 36 (MSEFDPNPPRRNFYGRRHGKTLRQSQKGYLSEDLGS) is disordered. Residues Glu-68, Glu-93, Asp-120, and Asp-142 each coordinate S-adenosyl-L-methionine. Residue Asp-142 is part of the active site. Residues Lys-146, Asp-178, and 211–214 (TRYE) each bind substrate.

This sequence belongs to the class I-like SAM-binding methyltransferase superfamily. TrmB family.

The enzyme catalyses guanosine(46) in tRNA + S-adenosyl-L-methionine = N(7)-methylguanosine(46) in tRNA + S-adenosyl-L-homocysteine. It functions in the pathway tRNA modification; N(7)-methylguanine-tRNA biosynthesis. Catalyzes the formation of N(7)-methylguanine at position 46 (m7G46) in tRNA. This Paracoccus denitrificans (strain Pd 1222) protein is tRNA (guanine-N(7)-)-methyltransferase.